A 762-amino-acid polypeptide reads, in one-letter code: cGMP-dependent protein kinase 2 (762 aa).

A disordered region spans residues 1 to 25 (MGNGSVKPKHSKHPDGQSGNLSNEA). Residue G2 is the site of N-myristoyl glycine attachment. Phosphoserine occurs at positions 110 and 117. Residues 112–138 (LVSLHSRRGAKAGVSAEPTSRTYDLNK) form a disordered region. A cGMP-binding, high affinity; cAMP-binding, moderate affinity region spans residues 168-283 (FLKRLDPQQI…DEEYRNFLRS (116 aa)). Residues 232 to 235 (GELA), 242 to 243 (RT), K347, 356 to 359 (GEKA), 366 to 367 (RS), D412, and R415 contribute to the 3',5'-cyclic GMP site. The interval 286–416 (LLKNLPEDKL…TLNRDDEKRH (131 aa)) is cGMP-binding, high affinity; cAMP-binding, low affinity. At S431 the chain carries Phosphoserine. The 259-residue stretch at 453 to 711 (LEIIATLGVG…INDIKKHRWL (259 aa)) folds into the Protein kinase domain. Residues 459-467 (LGVGGFGRV) and K482 contribute to the ATP site. The Proton acceptor role is filled by D576. T609 is modified (phosphothreonine). The 51-residue stretch at 712-762 (NGFNWEGLKARSLPSPLRRELSGPIDHSYFDKYPPEKGVPPDEMSGWDKDF) folds into the AGC-kinase C-terminal domain. The disordered stretch occupies residues 740 to 762 (YFDKYPPEKGVPPDEMSGWDKDF).

This sequence belongs to the protein kinase superfamily. AGC Ser/Thr protein kinase family. cGMP subfamily. As to quaternary structure, interacts with GRIA1/GLUR1. In terms of processing, myristoylation mediates membrane localization. In terms of tissue distribution, highly expressed in intestinal mucosa and is 20 times less abundant in brain and kidney. Expressed in jejunum, in the apical domain of the villus epithelium.

The protein resides in the apical cell membrane. It localises to the cell membrane. The catalysed reaction is L-seryl-[protein] + ATP = O-phospho-L-seryl-[protein] + ADP + H(+). The enzyme catalyses L-threonyl-[protein] + ATP = O-phospho-L-threonyl-[protein] + ADP + H(+). With respect to regulation, binding of cGMP results in enzyme activation. In terms of biological role, crucial regulator of intestinal secretion and bone growth. Phosphorylates and activates CFTR on the plasma membrane. Plays a key role in intestinal secretion by regulating cGMP-dependent translocation of CFTR in jejunum. Acts downstream of NMDAR to activate the plasma membrane accumulation of GRIA1/GLUR1 in synapse and increase synaptic plasticity. Phosphorylates GRIA1/GLUR1 at Ser-863. Acts as regulator of gene expression and activator of the extracellular signal-regulated kinases MAPK3/ERK1 and MAPK1/ERK2 in mechanically stimulated osteoblasts. Under fluid shear stress, mediates ERK activation and subsequent induction of FOS, FOSL1/FRA1, FOSL2/FRA2 and FOSB that play a key role in the osteoblast anabolic response to mechanical stimulation. The protein is cGMP-dependent protein kinase 2 (Prkg2) of Rattus norvegicus (Rat).